The primary structure comprises 58 residues: MTEVRLNNQTLVRLEAPTPSWKWIKLSRTLKLKMLNLPGVKIFRGAPENEDQDRDNLM.

This Snake adenovirus serotype 1 (SnAdV-1) protein is Probable U-exon protein.